We begin with the raw amino-acid sequence, 433 residues long: Trigger factor (433 aa).

One can recognise a PPIase FKBP-type domain in the interval aspartate 161–proline 246.

This sequence belongs to the FKBP-type PPIase family. Tig subfamily.

It localises to the cytoplasm. The enzyme catalyses [protein]-peptidylproline (omega=180) = [protein]-peptidylproline (omega=0). In terms of biological role, involved in protein export. Acts as a chaperone by maintaining the newly synthesized protein in an open conformation. Functions as a peptidyl-prolyl cis-trans isomerase. The protein is Trigger factor of Photobacterium profundum (strain SS9).